The chain runs to 185 residues: Elongation factor P (185 aa).

This sequence belongs to the elongation factor P family.

It is found in the cytoplasm. Its pathway is protein biosynthesis; polypeptide chain elongation. Functionally, involved in peptide bond synthesis. Stimulates efficient translation and peptide-bond synthesis on native or reconstituted 70S ribosomes in vitro. Probably functions indirectly by altering the affinity of the ribosome for aminoacyl-tRNA, thus increasing their reactivity as acceptors for peptidyl transferase. This chain is Elongation factor P, found in Bacillus licheniformis (strain ATCC 14580 / DSM 13 / JCM 2505 / CCUG 7422 / NBRC 12200 / NCIMB 9375 / NCTC 10341 / NRRL NRS-1264 / Gibson 46).